A 100-amino-acid polypeptide reads, in one-letter code: METLVSSIFWTLAPWNNMLLLKHGRIEILEQNTMYGWYELPKQEFLNSEQPVHIFTTKKRSTGFRIGPESEGRLECQQASIIEFTRPDSTHFGNVQCQSH.

This sequence belongs to the ycf15 family.

It localises to the plastid. The protein localises to the chloroplast. This is an uncharacterized protein from Panax ginseng (Korean ginseng).